The chain runs to 492 residues: Steroid 21-hydroxylase (492 aa).

2 residues coordinate heme b: arginine 91 and lysine 120. Residue arginine 231 coordinates 17alpha-hydroxyprogesterone. Arginine 231 is a binding site for progesterone. Heme b contacts are provided by histidine 363, arginine 424, and cysteine 426.

The protein belongs to the cytochrome P450 family. Heme b is required as a cofactor.

The protein localises to the endoplasmic reticulum membrane. It is found in the microsome membrane. It catalyses the reaction 17alpha-hydroxyprogesterone + reduced [NADPH--hemoprotein reductase] + O2 = 11-deoxycortisol + oxidized [NADPH--hemoprotein reductase] + H2O + H(+). It carries out the reaction progesterone + reduced [NADPH--hemoprotein reductase] + O2 = 21-hydroxyprogesterone + oxidized [NADPH--hemoprotein reductase] + H2O + H(+). In terms of biological role, specifically catalyzes the 21-hydroxylation of steroids. Required for the adrenal synthesis of mineralocorticoids and glucocorticoids. This chain is Steroid 21-hydroxylase (CYP21), found in Felis catus (Cat).